A 315-amino-acid chain; its full sequence is L-lactate dehydrogenase (315 aa).

NAD(+) contacts are provided by residues Val-14, Asp-35, Tyr-67, and 81-82 (GV). Substrate contacts are provided by residues Gln-84, Arg-91, and 123 to 126 (NPVD). NAD(+) is bound by residues 121-123 (ASN) and Ser-146. Residue 151-154 (DSAR) participates in substrate binding. Catalysis depends on His-178, which acts as the Proton acceptor. Phosphotyrosine is present on Tyr-219. Substrate is bound at residue Thr-228.

The protein belongs to the LDH/MDH superfamily. LDH family. Homotetramer.

It localises to the cytoplasm. It catalyses the reaction (S)-lactate + NAD(+) = pyruvate + NADH + H(+). Its pathway is fermentation; pyruvate fermentation to lactate; (S)-lactate from pyruvate: step 1/1. Its function is as follows. Catalyzes the conversion of lactate to pyruvate. This chain is L-lactate dehydrogenase, found in Malacoplasma penetrans (strain HF-2) (Mycoplasma penetrans).